Reading from the N-terminus, the 333-residue chain is Diaminopimelate epimerase (333 aa).

Substrate contacts are provided by asparagine 24 and asparagine 79. The active-site Proton donor is the cysteine 88. Substrate is bound by residues 89 to 90 (GN), asparagine 176, asparagine 210, and 228 to 229 (ER). The active-site Proton acceptor is cysteine 237. 238–239 (GT) contacts substrate.

It belongs to the diaminopimelate epimerase family. As to quaternary structure, homodimer.

It is found in the cytoplasm. The catalysed reaction is (2S,6S)-2,6-diaminopimelate = meso-2,6-diaminopimelate. It participates in amino-acid biosynthesis; L-lysine biosynthesis via DAP pathway; DL-2,6-diaminopimelate from LL-2,6-diaminopimelate: step 1/1. In terms of biological role, catalyzes the stereoinversion of LL-2,6-diaminopimelate (L,L-DAP) to meso-diaminopimelate (meso-DAP), a precursor of L-lysine and an essential component of the bacterial peptidoglycan. This is Diaminopimelate epimerase from Clostridium acetobutylicum (strain ATCC 824 / DSM 792 / JCM 1419 / IAM 19013 / LMG 5710 / NBRC 13948 / NRRL B-527 / VKM B-1787 / 2291 / W).